The following is a 165-amino-acid chain: Protein NKG7 (165 aa).

Helical transmembrane passes span 9 to 29 (LFAG…DFWI), 61 to 81 (FCIL…LSCI), 92 to 112 (LVST…MAVY), and 133 to 153 (FYLG…SLGA).

It belongs to the PMP-22/EMP/MP20 family. In terms of tissue distribution, predominantly expressed by leukocytes with cytotoxic activity such as CD8(+) T-cells and natural killer cells.

Its subcellular location is the cell membrane. It is found in the cytolytic granule membrane. Functionally, regulates cytotoxic granule exocytosis in effector lymphocytes, thus acting as a critical mediator of inflammation in a broad range of infectious and non-infectious diseases. Essential for cytotoxic degranulation of natural killer (NK) cells and CD8(+) T-cells and for the activation of CD4(+) T-cells following infection. Plays a critical role in CD8(+) T-cell and NK cell-mediated cytolysis of target cells and contributes to the cytolytic activity via the perforin/granzyme pathway by enhancing exocytosis of LAMP1-carrying lytic granules. Contributes to NK cell-mediated control of cancer metastasis. The chain is Protein NKG7 (Nkg7) from Mus musculus (Mouse).